We begin with the raw amino-acid sequence, 459 residues long: Serine carboxypeptidase-like 27 (459 aa).

Residues 1 to 20 form the signal peptide; the sequence is MDYSFLLIILLLTISTSCCA. 3 disulfides stabilise this stretch: cysteine 91-cysteine 344, cysteine 252-cysteine 264, and cysteine 288-cysteine 312. Asparagine 142 carries N-linked (GlcNAc...) asparagine glycosylation. Residue serine 184 is part of the active site. Asparagine 289 and asparagine 333 each carry an N-linked (GlcNAc...) asparagine glycan. Residues aspartate 381 and histidine 433 contribute to the active site.

It belongs to the peptidase S10 family. In terms of tissue distribution, ubiquitous.

The protein localises to the secreted. Probable carboxypeptidase. This Arabidopsis thaliana (Mouse-ear cress) protein is Serine carboxypeptidase-like 27 (SCPL27).